A 592-amino-acid chain; its full sequence is Protein alan shepard (592 aa).

The interval 1–68 is disordered; the sequence is MGGPHHQHQQ…ASVAAAPPTP (68 aa). Residues 18 to 28 are compositionally biased toward gly residues; it reads VGGGNGHGGGA. Residues 36 to 54 show a composition bias toward polar residues; sequence PNSQQLPPQMPRSQNYANG. Residues 55 to 64 show a composition bias toward low complexity; sequence SSSAASVAAA. 2 positions are modified to phosphotyrosine: Tyr-124 and Tyr-140. Positions 162 to 224 are disordered; the sequence is PATTTYGQRV…AQNQNQQGGE (63 aa). A compositionally biased stretch (low complexity) spans 176–224; sequence SPSNTNSSSSSNTGSQSGTLSTSLSNTTNTNTTMGPNGTAQNQNQQGGE. RRM domains are found at residues 229–307 and 319–398; these read TNLY…IWVL and TNLY…FADG. Residues 565-592 are disordered; that stretch reads PMTDSEQASTAASPDEAYTQYPHQAAPK.

In terms of biological role, has a role in the perception of gravity. This is Protein alan shepard from Drosophila mojavensis (Fruit fly).